Consider the following 458-residue polypeptide: tRNA modification GTPase MnmE (458 aa).

R26, E88, and R127 together coordinate (6S)-5-formyl-5,6,7,8-tetrahydrofolate. The 155-residue stretch at 224–378 (GLSTAIIGRP…IEDRINQLFF (155 aa)) folds into the TrmE-type G domain. Residue N234 participates in K(+) binding. GTP is bound by residues 234 to 239 (NVGKSS), 253 to 259 (TDIAGTT), and 278 to 281 (DTAG). S238 contributes to the Mg(2+) binding site. Residues T253, I255, and T258 each coordinate K(+). Mg(2+) is bound at residue T259. K458 contributes to the (6S)-5-formyl-5,6,7,8-tetrahydrofolate binding site.

Belongs to the TRAFAC class TrmE-Era-EngA-EngB-Septin-like GTPase superfamily. TrmE GTPase family. Homodimer. Heterotetramer of two MnmE and two MnmG subunits. Requires K(+) as cofactor.

The protein localises to the cytoplasm. Exhibits a very high intrinsic GTPase hydrolysis rate. Involved in the addition of a carboxymethylaminomethyl (cmnm) group at the wobble position (U34) of certain tRNAs, forming tRNA-cmnm(5)s(2)U34. This chain is tRNA modification GTPase MnmE, found in Streptococcus pyogenes serotype M18 (strain MGAS8232).